The sequence spans 1076 residues: Atos homolog protein A (1076 aa).

The segment at 24–32 (ALLITEGRT) is transactivation domain 1 (TAD1). 2 disordered regions span residues 700 to 721 (ESMS…TQLN) and 739 to 765 (SDQL…QRRS). Basic and acidic residues predominate over residues 739-754 (SDQLKNEQDKQEDPTN). The interval 878–935 (LLGNFEESVLNYRFDPLGIVDGFTAEVGASGAFCPTHLTLPVEVSFYSVSDDNAPSPY) is required for macropage invasion. Residues 962–970 (FNPNKTVVK) are transactivation domain 2 (TAD2).

This sequence belongs to the ATOS family.

The protein resides in the nucleus. Its function is as follows. Transcription regulator that syncronizes transcriptional and translational programs to promote macrophage invasion of tissues. The sequence is that of Atos homolog protein A from Homo sapiens (Human).